We begin with the raw amino-acid sequence, 100 residues long: MAEEHNHNHEEENIIWITNEEGKEEAYEILFDFDSEDFDKSYVLYFPAGKGEDEEIEILASSYIQDEEGKQGQLKPVETDEEWDMIEEILATFLADEDEE.

The protein belongs to the UPF0473 family.

The polypeptide is UPF0473 protein Lm4b_01511 (Listeria monocytogenes serotype 4b (strain CLIP80459)).